A 364-amino-acid polypeptide reads, in one-letter code: D-alanine--D-alanine ligase (364 aa).

Residues 134–347 (RRLACINGLK…YPDLLDELIN (214 aa)) enclose the ATP-grasp domain. Position 167 to 222 (167 to 222 (ASEFGWPLFVKPCSLGSSVGIHKANNMDELNAAVADALRYDEEILVEEFIVGREIE)) interacts with ATP. 3 residues coordinate Mg(2+): Asp-300, Glu-314, and Asn-316.

The protein belongs to the D-alanine--D-alanine ligase family. Requires Mg(2+) as cofactor. Mn(2+) is required as a cofactor.

It is found in the cytoplasm. It catalyses the reaction 2 D-alanine + ATP = D-alanyl-D-alanine + ADP + phosphate + H(+). The protein operates within cell wall biogenesis; peptidoglycan biosynthesis. Functionally, cell wall formation. This Legionella pneumophila (strain Paris) protein is D-alanine--D-alanine ligase.